Here is a 20-residue protein sequence, read N- to C-terminus: Unknown protein NF015 from 2D-PAGE (20 aa).

Positions 1–20 (TPQIQKPAPQFSKTALLPDE) are disordered.

The protein is Unknown protein NF015 from 2D-PAGE of Naegleria fowleri (Brain eating amoeba).